Consider the following 86-residue polypeptide: Putative defensin-like protein 9 (86 aa).

The signal sequence occupies residues 1 to 29; it reads MKSSMQLISTLFFLVILVVAPGMKMVVEG. A Pyrrolidone carboxylic acid modification is found at Q30. 4 disulfides stabilise this stretch: C34/C79, C45/C65, C51/C73, and C55/C75.

It belongs to the DEFL family.

The protein localises to the secreted. The chain is Putative defensin-like protein 9 (LCR76) from Arabidopsis thaliana (Mouse-ear cress).